A 477-amino-acid chain; its full sequence is Cysteine--tRNA ligase (477 aa).

C34 contacts Zn(2+). The 'HIGH' region signature appears at 36–46 (PTVYDFAHIGN). C235, H260, and E264 together coordinate Zn(2+). A 'KMSKS' region motif is present at residues 293–297 (KMSKS). K296 provides a ligand contact to ATP.

Belongs to the class-I aminoacyl-tRNA synthetase family. In terms of assembly, monomer. The cofactor is Zn(2+).

The protein localises to the cytoplasm. The enzyme catalyses tRNA(Cys) + L-cysteine + ATP = L-cysteinyl-tRNA(Cys) + AMP + diphosphate. In Mesorhizobium japonicum (strain LMG 29417 / CECT 9101 / MAFF 303099) (Mesorhizobium loti (strain MAFF 303099)), this protein is Cysteine--tRNA ligase.